A 305-amino-acid polypeptide reads, in one-letter code: GTPase Era (305 aa).

Residues 13–181 (RCGFVAIVGR…ESAVGRFLPE (169 aa)) form the Era-type G domain. The interval 21-28 (GRPNVGKS) is G1. 21 to 28 (GRPNVGKS) is a binding site for GTP. Residues 47–51 (QTTRH) are G2. The tract at residues 68 to 71 (DTPG) is G3. Residues 68-72 (DTPGM) and 130-133 (NKVD) contribute to the GTP site. A G4 region spans residues 130–133 (NKVD). Residues 160-162 (LSA) are G5. The KH type-2 domain maps to 204 to 288 (VREKITRQLG…MLRLWVKVKR (85 aa)).

This sequence belongs to the TRAFAC class TrmE-Era-EngA-EngB-Septin-like GTPase superfamily. Era GTPase family. Monomer.

The protein localises to the cytoplasm. It localises to the cell inner membrane. Its function is as follows. An essential GTPase that binds both GDP and GTP, with rapid nucleotide exchange. Plays a role in 16S rRNA processing and 30S ribosomal subunit biogenesis and possibly also in cell cycle regulation and energy metabolism. This Marinobacter nauticus (strain ATCC 700491 / DSM 11845 / VT8) (Marinobacter aquaeolei) protein is GTPase Era.